A 479-amino-acid polypeptide reads, in one-letter code: Fibrinogen beta chain (479 aa).

The N-terminal stretch at 1 to 18 (MRHLWLLLLSVSLVQTQA) is a signal peptide. Residues 20–82 (TTDSDKVDLS…VERKPPDAGG (63 aa)) form a disordered region. The segment at 33 to 35 (GHR) is beta-chain polymerization, binding distal domain of another fibrin. 2 stretches are compositionally biased toward basic and acidic residues: residues 35-45 (RPVDRRKEEPP) and 64-78 (AKVD…RKPP). 2 disulfides stabilise this stretch: cysteine 219-cysteine 304 and cysteine 229-cysteine 258. Positions 220–476 (NIPVVSGKEC…RMSMKIRPVF (257 aa)) constitute a Fibrinogen C-terminal domain. Asparagine 382 carries N-linked (GlcNAc...) asparagine glycosylation. An intrachain disulfide couples cysteine 412 to cysteine 425.

Heterohexamer; disulfide linked. Contains 2 sets of 3 non-identical chains (alpha, beta and gamma). The 2 heterotrimers are in head to head conformation with the N-termini in a small central domain. Conversion of fibrinogen to fibrin is triggered by thrombin, which cleaves fibrinopeptides A and B from alpha and beta chains, and thus exposes the N-terminal polymerization sites responsible for the formation of the soft clot.

Its subcellular location is the secreted. Its function is as follows. Cleaved by the protease thrombin to yield monomers which, together with fibrinogen alpha (FGA) and fibrinogen gamma (FGG), polymerize to form an insoluble fibrin matrix. Fibrin has a major function in hemostasis as one of the primary components of blood clots. In addition, functions during the early stages of wound repair to stabilize the lesion and guide cell migration during re-epithelialization. Was originally thought to be essential for platelet aggregation, based on in vitro studies using anticoagulated blood. However subsequent studies have shown that it is not absolutely required for thrombus formation in vivo. Enhances expression of SELP in activated platelets. Maternal fibrinogen is essential for successful pregnancy. Fibrin deposition is also associated with infection, where it protects against IFNG-mediated hemorrhage. May also facilitate the antibacterial immune response via both innate and T-cell mediated pathways. This chain is Fibrinogen beta chain (Fgb), found in Rattus norvegicus (Rat).